A 569-amino-acid polypeptide reads, in one-letter code: Atlastin-2 (569 aa).

The N-terminal hypervariable region (HVR) stretch occupies residues M1 to P49. Over M1–A464 the chain is Cytoplasmic. Positions D80 to N324 constitute a GB1/RHD3-type G domain. Positions 93, 94, 95, 96, 97, 98, 163, 232, and 233 each coordinate GDP. GTP-binding residues include R93, K94, G95, K96, S97, and F98. S97 provides a ligand contact to Mg(2+). Residues R232 and D233 each contribute to the GTP site. The stretch at L244–I272 forms a coiled coil. GDP is bound by residues V291 and N294. Position 291 (V291) interacts with GTP. Residues M362–G453 form a 3HB (three-helix bundle) domain region. A linker region spans residues K454 to T462. The chain crosses the membrane as a helical span at residues T465–M485. At N486 to S487 the chain is on the lumenal side. A helical transmembrane segment spans residues I488 to Y508. The Cytoplasmic portion of the chain corresponds to V509–N569. Positions K535–N569 are autoinhibitory domain.

This sequence belongs to the TRAFAC class dynamin-like GTPase superfamily. GB1/RHD3 GTPase family. GB1 subfamily. As to quaternary structure, monomeric and homodimeric. The homodimer, transiently formed by two molecules on opposing membranes, is the active form mediating ER membrane fusion.

Its subcellular location is the endoplasmic reticulum membrane. It carries out the reaction GTP + H2O = GDP + phosphate + H(+). In terms of biological role, atlastin-2 (ATL2) is a membrane-anchored GTPase that mediates the GTP-dependent fusion of endoplasmic reticulum (ER) membranes, maintaining the continuous ER network. It facilitates the formation of three-way junctions where ER tubules intersect. Two atlastin-2 on neighboring ER tubules bind GTP and form loose homodimers through the GB1/RHD3-type G domains and 3HB regions. Upon GTP hydrolysis, the 3HB regions tighten, pulling the membranes together to drive their fusion. After fusion, the homodimer disassembles upon release of inorganic phosphate (Pi). Subsequently, GDP dissociates, resetting the monomers to a conformation ready for a new fusion cycle. The sequence is that of Atlastin-2 (atl2) from Xenopus laevis (African clawed frog).